The primary structure comprises 771 residues: Probable dipeptidyl peptidase 4 (771 aa).

The first 16 residues, 1-16, serve as a signal peptide directing secretion; it reads MKYSKLLLLLVSVVQA. 7 N-linked (GlcNAc...) asparagine glycosylation sites follow: asparagine 37, asparagine 80, asparagine 114, asparagine 173, asparagine 222, asparagine 470, and asparagine 495. Residues serine 618, aspartate 695, and histidine 730 each act as charge relay system in the active site.

This sequence belongs to the peptidase S9B family.

It localises to the secreted. The enzyme catalyses Release of an N-terminal dipeptide, Xaa-Yaa-|-Zaa-, from a polypeptide, preferentially when Yaa is Pro, provided Zaa is neither Pro nor hydroxyproline.. Its function is as follows. Extracellular dipeptidyl-peptidase which removes N-terminal dipeptides sequentially from polypeptides having unsubstituted N-termini provided that the penultimate residue is proline. This Aspergillus flavus (strain ATCC 200026 / FGSC A1120 / IAM 13836 / NRRL 3357 / JCM 12722 / SRRC 167) protein is Probable dipeptidyl peptidase 4 (dpp4).